Here is an 83-residue protein sequence, read N- to C-terminus: Arminin 3b (83 aa).

A signal peptide spans 1 to 18 (MKIVFAILFLTFIALTYA). A propeptide spanning residues 19–57 (RSFEDLKEEIKNEIEKEIFDDLEEESDELDNNVKKFNDA) is cleaved from the precursor. S80 carries the serine amide modification.

It belongs to the arminin family. In terms of tissue distribution, expressed in entodermal epithelium along the body column.

Its subcellular location is the secreted. The protein resides in the target cell membrane. In terms of biological role, antimicrobial peptide with a broad-spectrum antimicrobial activity. Keeps its antibacterial activity under a wide range of salt concentrations that mimic physiological conditions of human blood, which is surprising, since Hydra is an obligate freshwater animal with nearly no salt tolerance. Does not affect red blood cells. This is Arminin 3b from Hydra vulgaris (Hydra).